The chain runs to 458 residues: Serine protease Do-like HtrB (458 aa).

The segment covering Met1 to His18 has biased composition (basic and acidic residues). A disordered region spans residues Met1–Val42. At Met1–Arg71 the chain is on the cytoplasmic side. A helical membrane pass occupies residues Ala72–Ala92. Topologically, residues Pro93 to Ser458 are extracellular. The interval Gln146–Gly170 is disordered. Active-site charge relay system residues include His187, Asp217, and Ser298. Residues Gly296–Ser298 and Leu352–Met356 each bind substrate. Positions Met356–Gly440 constitute a PDZ domain.

Belongs to the peptidase S1C family.

It is found in the cell membrane. It carries out the reaction Acts on substrates that are at least partially unfolded. The cleavage site P1 residue is normally between a pair of hydrophobic residues, such as Val-|-Val.. Degrades abnormal exported proteins and responsible for the propeptide processing of a natural pro-protein and for the maturation of a native protein. It also plays a prominent role in stress (heat shock, ethanol, puromycin and NaCl) resistance during active exponential growth. The chain is Serine protease Do-like HtrB (htrB) from Bacillus subtilis (strain 168).